A 352-amino-acid chain; its full sequence is Alanine racemase (352 aa).

Residue K33 is the Proton acceptor; specific for D-alanine of the active site. An N6-(pyridoxal phosphate)lysine modification is found at K33. A substrate-binding site is contributed by R129. Y250 serves as the catalytic Proton acceptor; specific for L-alanine. Residue M298 coordinates substrate.

It belongs to the alanine racemase family. Pyridoxal 5'-phosphate is required as a cofactor.

The enzyme catalyses L-alanine = D-alanine. The protein operates within amino-acid biosynthesis; D-alanine biosynthesis; D-alanine from L-alanine: step 1/1. Its function is as follows. Catalyzes the interconversion of L-alanine and D-alanine. May also act on other amino acids. The chain is Alanine racemase (alr) from Neisseria meningitidis serogroup A / serotype 4A (strain DSM 15465 / Z2491).